The primary structure comprises 178 residues: Putative adenylate kinase (178 aa).

Residues G10, G12, K13, S14, and S15 each contribute to the ATP site. The tract at residues 29–50 is NMP; the sequence is TVVELAEKHGCIIDEEDGEIVI. Residues 94-104 form an LID region; sequence GRNWSEEKLLE. Position 95 (R95) interacts with ATP.

Belongs to the adenylate kinase family. AK6 subfamily. As to quaternary structure, interacts with uS11. Not a structural component of 40S pre-ribosomes, but transiently interacts with them by binding to uS11.

The enzyme catalyses AMP + ATP = 2 ADP. It carries out the reaction ATP + H2O = ADP + phosphate + H(+). Functionally, broad-specificity nucleoside monophosphate (NMP) kinase that catalyzes the reversible transfer of the terminal phosphate group between nucleoside triphosphates and monophosphates. Also has ATPase activity. Involved in the late maturation steps of the 30S ribosomal particles, specifically 16S rRNA maturation. While NMP activity is not required for ribosome maturation, ATPase activity is. Associates transiently with small ribosomal subunit protein uS11. ATP hydrolysis breaks the interaction with uS11. May temporarily remove uS11 from the ribosome to enable a conformational change of the ribosomal RNA that is needed for the final maturation step of the small ribosomal subunit. In Archaeoglobus fulgidus (strain ATCC 49558 / DSM 4304 / JCM 9628 / NBRC 100126 / VC-16), this protein is Putative adenylate kinase.